The sequence spans 239 residues: Phosphothreonine lyase OspF (239 aa).

Histidine 104 functions as the Proton donor in the catalytic mechanism. The active-site Proton acceptor is the lysine 134.

The protein belongs to the phosphothreonine lyase family.

It localises to the secreted. Inhibited by the tyrosine phosphatase inhibitor vanadate. Functionally, catalyzes the removal of the phosphate group from the phosphothreonine in the mitogen-activated protein kinases such as MAPK2/ERK2, MAPK3/ERK1, MAPK8 and MAPK14 in an irreversible reaction, thus preventing the downstream phosphorylation of histone H3. This epigenetic modification results in inhibition of the transcription of a specific subset of pro-inflammatory genes, and ultimately to a reduced immune response against the invading pathogen. The diminished immune response enhances the bacterium's ability to disseminate and multiply within the host. This is Phosphothreonine lyase OspF (ospF) from Shigella flexneri.